A 631-amino-acid chain; its full sequence is Phosphomethylpyrimidine synthase (631 aa).

Residues Asn239, Met268, Tyr297, His333, 353 to 355 (SRG), 394 to 397 (DGLR), and Glu433 each bind substrate. A Zn(2+)-binding site is contributed by His437. Position 460 (Tyr460) interacts with substrate. His501 is a binding site for Zn(2+). Residues Cys581, Cys584, and Cys589 each contribute to the [4Fe-4S] cluster site.

The protein belongs to the ThiC family. In terms of assembly, homodimer. Requires [4Fe-4S] cluster as cofactor.

It carries out the reaction 5-amino-1-(5-phospho-beta-D-ribosyl)imidazole + S-adenosyl-L-methionine = 4-amino-2-methyl-5-(phosphooxymethyl)pyrimidine + CO + 5'-deoxyadenosine + formate + L-methionine + 3 H(+). It functions in the pathway cofactor biosynthesis; thiamine diphosphate biosynthesis. In terms of biological role, catalyzes the synthesis of the hydroxymethylpyrimidine phosphate (HMP-P) moiety of thiamine from aminoimidazole ribotide (AIR) in a radical S-adenosyl-L-methionine (SAM)-dependent reaction. This is Phosphomethylpyrimidine synthase from Citrobacter koseri (strain ATCC BAA-895 / CDC 4225-83 / SGSC4696).